Here is a 162-residue protein sequence, read N- to C-terminus: uncharacterized protein (162 aa).

Its subcellular location is the cytoplasm. It is found in the nucleus. This is an uncharacterized protein from Schizosaccharomyces pombe (strain 972 / ATCC 24843) (Fission yeast).